The sequence spans 320 residues: Fructose-1,6-bisphosphatase class 1 (320 aa).

Mg(2+) contacts are provided by glutamate 84, aspartate 103, leucine 105, and aspartate 106. Substrate is bound by residues 106 to 109 (DGSS), asparagine 196, and lysine 262. Glutamate 268 is a binding site for Mg(2+).

It belongs to the FBPase class 1 family. Homotetramer. Mg(2+) is required as a cofactor.

It localises to the cytoplasm. The enzyme catalyses beta-D-fructose 1,6-bisphosphate + H2O = beta-D-fructose 6-phosphate + phosphate. It participates in carbohydrate biosynthesis; gluconeogenesis. This is Fructose-1,6-bisphosphatase class 1 from Shewanella amazonensis (strain ATCC BAA-1098 / SB2B).